An 888-amino-acid polypeptide reads, in one-letter code: 3-hydroxy-3-methylglutaryl-coenzyme A reductase (888 aa).

The Cytoplasmic portion of the chain corresponds to 1–9 (MLSRLFRMH). The chain crosses the membrane as a helical span at residues 10-39 (GLFVASHPWEVIVGTVTLTICMMSMNMFTG). Topologically, residues 40–56 (NNKICGWNYECPKLEED) are lumenal. A helical transmembrane segment spans residues 57 to 78 (VLSSDIIILTITRCIAILYIYF). An SSD domain is found at 61–218 (DIIILTITRC…MTFFPACVSL (158 aa)). Residues 75-78 (YIYF) carry the INSIG-binding motif motif. Residues 79–89 (QFQNLRQLGSK) are Cytoplasmic-facing. Lysine 89 participates in a covalent cross-link: Glycyl lysine isopeptide (Lys-Gly) (interchain with G-Cter in ubiquitin). The helical transmembrane segment at 90–114 (YILGIAGLFTIFSSFVFSTVVIHFL) threads the bilayer. At 115 to 123 (DKELTGLNE) the chain is on the lumenal side. The helical transmembrane segment at 124–149 (ALPFFLLLVDLSRASALAKFALSSNS) threads the bilayer. Residues 150 to 159 (QDEVRENIAR) are Cytoplasmic-facing. Residues 160–187 (GMAILGPTFTLDALVECLVIGVGTMSGV) traverse the membrane as a helical segment. Residues 188–191 (RQLE) are Lumenal-facing. Residues 192–220 (IMCCFGCMSVLANYFVFMTFFPACVSLVL) traverse the membrane as a helical segment. The Cytoplasmic portion of the chain corresponds to 221-248 (ELSRESREGRPIWQLSHFARVLEEEENK). Lysine 248 participates in a covalent cross-link: Glycyl lysine isopeptide (Lys-Gly) (interchain with G-Cter in ubiquitin). A helical transmembrane segment spans residues 249–275 (PNPVTQRVKMIMSLGLVLVHAHSRWIA). Residues 276–314 (DPSPQNSTADNSKVSLGLDENVSKRIEPSVSLWQFYLSK) lie on the Lumenal side of the membrane. N-linked (GlcNAc...) asparagine glycans are attached at residues asparagine 281 and asparagine 296. The chain crosses the membrane as a helical span at residues 315–339 (MISMDIEQVITLSLALLLAVKYIFF). Over 340 to 888 (EQAETESTLS…LQGTCTKKAA (549 aa)) the chain is Cytoplasmic. Active-site charge relay system residues include glutamate 559, lysine 691, and aspartate 767. Catalysis depends on histidine 866, which acts as the Proton donor. Position 872 is a phosphoserine; by AMPK (serine 872).

This sequence belongs to the HMG-CoA reductase family. Homotetramer. Homodimer. Interacts (via its SSD) with INSIG1; the interaction, accelerated by sterols, leads to the recruitment of HMGCR to AMFR/gp78 for its ubiquitination by the sterol-mediated ERAD pathway. Interacts with UBIAD1. In terms of processing, undergoes sterol-mediated ubiquitination and ER-associated degradation (ERAD). Accumulation of sterols in the endoplasmic reticulum (ER) membrane, triggers binding of the reductase to the ER membrane protein INSIG1 or INSIG2. The INSIG1 binding leads to the recruitment of the ubiquitin ligase, AMFR/gp78, RNF139 or RNF145, initiating ubiquitination of the reductase. The ubiquitinated reductase is then extracted from the ER membrane and delivered to cytosolic 26S proteosomes by a mechanism probably mediated by the ATPase Valosin-containing protein VCP/p97. The INSIG2-binding leads to the recruitment of the ubiquitin ligase RNF139, initiating ubiquitination of the reductase. Lys-248 is the main site of ubiquitination. Ubiquitination is enhanced by the presence of a geranylgeranylated protein. N-glycosylated. Deglycosylated by NGLY1 on release from the endoplasmic reticulum (ER) in a sterol-mediated manner. Post-translationally, phosphorylated. Phosphorylation at Ser-872 reduces the catalytic activity.

Its subcellular location is the endoplasmic reticulum membrane. The protein resides in the peroxisome membrane. The catalysed reaction is (R)-mevalonate + 2 NADP(+) + CoA = (3S)-3-hydroxy-3-methylglutaryl-CoA + 2 NADPH + 2 H(+). Its pathway is metabolic intermediate biosynthesis; (R)-mevalonate biosynthesis; (R)-mevalonate from acetyl-CoA: step 3/3. With respect to regulation, regulated by a negative feedback mechanism through sterols and non-sterol metabolites derived from mevalonate. Phosphorylation at Ser-872 down-regulates the catalytic activity. Functionally, catalyzes the conversion of (3S)-hydroxy-3-methylglutaryl-CoA (HMG-CoA) to mevalonic acid, the rate-limiting step in the synthesis of cholesterol and other isoprenoids, thus plays a critical role in cellular cholesterol homeostasis. The polypeptide is 3-hydroxy-3-methylglutaryl-coenzyme A reductase (HMGCR) (Bos taurus (Bovine)).